A 306-amino-acid chain; its full sequence is Probable 2-dehydro-3-deoxygalactonokinase DgoK1 (306 aa).

It belongs to the DgoK family.

The catalysed reaction is 2-dehydro-3-deoxy-D-galactonate + ATP = 2-dehydro-3-deoxy-6-phospho-D-galactonate + ADP + H(+). It functions in the pathway carbohydrate acid metabolism; D-galactonate degradation; D-glyceraldehyde 3-phosphate and pyruvate from D-galactonate: step 2/3. Functionally, involved in the degradation of galactose via the DeLey-Doudoroff pathway. The protein is Probable 2-dehydro-3-deoxygalactonokinase DgoK1 (dgoK1) of Rhizobium meliloti (strain 1021) (Ensifer meliloti).